Consider the following 329-residue polypeptide: GTP 3',8-cyclase (329 aa).

Residues 1–229 (MNQVDYLRIS…EGYVRGNGPA (229 aa)) enclose the Radical SAM core domain. Arg-8 provides a ligand contact to GTP. Positions 15 and 19 each coordinate [4Fe-4S] cluster. Tyr-21 contributes to the S-adenosyl-L-methionine binding site. A [4Fe-4S] cluster-binding site is contributed by Cys-22. Arg-60 contacts GTP. Gly-64 is an S-adenosyl-L-methionine binding site. A GTP-binding site is contributed by Thr-91. S-adenosyl-L-methionine is bound at residue Ser-115. Residue Lys-155 participates in GTP binding. Position 189 (Met-189) interacts with S-adenosyl-L-methionine. Positions 252 and 255 each coordinate [4Fe-4S] cluster. Residue 257 to 259 (RVR) coordinates GTP. Cys-269 contacts [4Fe-4S] cluster.

Belongs to the radical SAM superfamily. MoaA family. As to quaternary structure, monomer and homodimer. Requires [4Fe-4S] cluster as cofactor.

The enzyme catalyses GTP + AH2 + S-adenosyl-L-methionine = (8S)-3',8-cyclo-7,8-dihydroguanosine 5'-triphosphate + 5'-deoxyadenosine + L-methionine + A + H(+). It participates in cofactor biosynthesis; molybdopterin biosynthesis. In terms of biological role, catalyzes the cyclization of GTP to (8S)-3',8-cyclo-7,8-dihydroguanosine 5'-triphosphate. This Cyanothece sp. (strain PCC 7425 / ATCC 29141) protein is GTP 3',8-cyclase.